A 252-amino-acid chain; its full sequence is Probable transcriptional regulatory protein RF_0799 (252 aa).

The disordered stretch occupies residues Met-1 to Arg-21.

Belongs to the TACO1 family.

The protein resides in the cytoplasm. This is Probable transcriptional regulatory protein RF_0799 from Rickettsia felis (strain ATCC VR-1525 / URRWXCal2) (Rickettsia azadi).